The following is a 1110-amino-acid chain: Serine/threonine-protein kinase PknK (1110 aa).

The Protein kinase domain maps to Phe26–Arg283. Residues Ile32–Val40 and Lys55 each bind ATP. Asp149 acts as the Proton acceptor in catalysis. Mg(2+) contacts are provided by Asn154 and Asp167. 2 positions are modified to phosphothreonine; by autocatalysis: Thr179 and Thr181. The segment at Arg308–Gly343 is disordered.

The protein belongs to the protein kinase superfamily. Ser/Thr protein kinase family. In terms of assembly, forms oligomeric complexes in solution. Can autophosphorylate the carboxyl terminal region in addition to Thr-179 and Thr-181.

It localises to the cytoplasm. Its subcellular location is the cell membrane. The protein resides in the secreted. The protein localises to the cell wall. The enzyme catalyses L-seryl-[protein] + ATP = O-phospho-L-seryl-[protein] + ADP + H(+). The catalysed reaction is L-threonyl-[protein] + ATP = O-phospho-L-threonyl-[protein] + ADP + H(+). Functionally, key microbial factor involved in regulation of early and late events in tuberculosis infection, and in host-pathogen interactions. This Mycobacterium tuberculosis (strain CDC 1551 / Oshkosh) protein is Serine/threonine-protein kinase PknK (pknK).